We begin with the raw amino-acid sequence, 426 residues long: Enolase (426 aa).

Q163 contacts (2R)-2-phosphoglycerate. The active-site Proton donor is E205. Positions 242, 286, and 313 each coordinate Mg(2+). The (2R)-2-phosphoglycerate site is built by K338, R367, S368, and K389. The active-site Proton acceptor is K338.

The protein belongs to the enolase family. Mg(2+) serves as cofactor.

The protein localises to the cytoplasm. The protein resides in the secreted. Its subcellular location is the cell surface. It catalyses the reaction (2R)-2-phosphoglycerate = phosphoenolpyruvate + H2O. Its pathway is carbohydrate degradation; glycolysis; pyruvate from D-glyceraldehyde 3-phosphate: step 4/5. Its function is as follows. Catalyzes the reversible conversion of 2-phosphoglycerate (2-PG) into phosphoenolpyruvate (PEP). It is essential for the degradation of carbohydrates via glycolysis. The sequence is that of Enolase from Helicobacter pylori (strain ATCC 700392 / 26695) (Campylobacter pylori).